Here is a 599-residue protein sequence, read N- to C-terminus: Sulfite reductase [NADPH] flavoprotein alpha-component (599 aa).

The Flavodoxin-like domain maps to 64–202; the sequence is ITIISASQTG…AASEWRARVV (139 aa). Residues 70 to 75, 117 to 120, and 153 to 162 contribute to the FMN site; these read SQTGNA, STQG, and LGDSSYEFFC. The FAD-binding FR-type domain maps to 234-448; it reads DAPLVASLSV…IEHNDNFRLP (215 aa). Residues Thr-322, Ala-356, 386-389, 404-406, Tyr-410, and 419-422 each bind FAD; these read RLYS, TVG, and GGAS. NADP(+)-binding positions include 519–520, 525–529, and Asp-561; these read SR and KVYVQ. FAD is bound at residue Tyr-599.

The protein belongs to the NADPH-dependent sulphite reductase flavoprotein subunit CysJ family. In the N-terminal section; belongs to the flavodoxin family. This sequence in the C-terminal section; belongs to the flavoprotein pyridine nucleotide cytochrome reductase family. As to quaternary structure, alpha(8)-beta(8). The alpha component is a flavoprotein, the beta component is a hemoprotein. FAD is required as a cofactor. The cofactor is FMN.

It carries out the reaction hydrogen sulfide + 3 NADP(+) + 3 H2O = sulfite + 3 NADPH + 4 H(+). Its pathway is sulfur metabolism; hydrogen sulfide biosynthesis; hydrogen sulfide from sulfite (NADPH route): step 1/1. In terms of biological role, component of the sulfite reductase complex that catalyzes the 6-electron reduction of sulfite to sulfide. This is one of several activities required for the biosynthesis of L-cysteine from sulfate. The flavoprotein component catalyzes the electron flow from NADPH -&gt; FAD -&gt; FMN to the hemoprotein component. The polypeptide is Sulfite reductase [NADPH] flavoprotein alpha-component (Shigella dysenteriae serotype 1 (strain Sd197)).